Reading from the N-terminus, the 743-residue chain is Phosphoribosylformylglycinamidine synthase subunit PurL (743 aa).

Residue His-50 is part of the active site. Residues Tyr-53 and Lys-92 each contribute to the ATP site. Mg(2+) is bound at residue Glu-94. Residues 95–98 (SHNH) and Arg-117 contribute to the substrate site. His-96 serves as the catalytic Proton acceptor. Asp-118 is a binding site for Mg(2+). A substrate-binding site is contributed by Gln-241. Asp-269 contributes to the Mg(2+) binding site. A substrate-binding site is contributed by 313 to 315 (ESQ). ATP contacts are provided by Asp-494 and Gly-531. Asn-532 is a binding site for Mg(2+). Ser-534 is a substrate binding site.

Belongs to the FGAMS family. As to quaternary structure, monomer. Part of the FGAM synthase complex composed of 1 PurL, 1 PurQ and 2 PurS subunits.

The protein localises to the cytoplasm. The enzyme catalyses N(2)-formyl-N(1)-(5-phospho-beta-D-ribosyl)glycinamide + L-glutamine + ATP + H2O = 2-formamido-N(1)-(5-O-phospho-beta-D-ribosyl)acetamidine + L-glutamate + ADP + phosphate + H(+). The protein operates within purine metabolism; IMP biosynthesis via de novo pathway; 5-amino-1-(5-phospho-D-ribosyl)imidazole from N(2)-formyl-N(1)-(5-phospho-D-ribosyl)glycinamide: step 1/2. Part of the phosphoribosylformylglycinamidine synthase complex involved in the purines biosynthetic pathway. Catalyzes the ATP-dependent conversion of formylglycinamide ribonucleotide (FGAR) and glutamine to yield formylglycinamidine ribonucleotide (FGAM) and glutamate. The FGAM synthase complex is composed of three subunits. PurQ produces an ammonia molecule by converting glutamine to glutamate. PurL transfers the ammonia molecule to FGAR to form FGAM in an ATP-dependent manner. PurS interacts with PurQ and PurL and is thought to assist in the transfer of the ammonia molecule from PurQ to PurL. The polypeptide is Phosphoribosylformylglycinamidine synthase subunit PurL (Rhizobium meliloti (strain 1021) (Ensifer meliloti)).